A 175-amino-acid polypeptide reads, in one-letter code: Large ribosomal subunit protein uL10 (175 aa).

Belongs to the universal ribosomal protein uL10 family. In terms of assembly, part of the ribosomal stalk of the 50S ribosomal subunit. The N-terminus interacts with L11 and the large rRNA to form the base of the stalk. The C-terminus forms an elongated spine to which L12 dimers bind in a sequential fashion forming a multimeric L10(L12)X complex.

Functionally, forms part of the ribosomal stalk, playing a central role in the interaction of the ribosome with GTP-bound translation factors. This Delftia acidovorans (strain DSM 14801 / SPH-1) protein is Large ribosomal subunit protein uL10.